The following is a 95-amino-acid chain: Class II hydrophobin 3 (95 aa).

The first 16 residues, 1-16 (MKLLAVAALLAGAAIA), serve as a signal peptide directing secretion. Disulfide bonds link Cys-28–Cys-77, Cys-38–Cys-68, Cys-39–Cys-51, and Cys-78–Cys-89.

This sequence belongs to the cerato-ulmin hydrophobin family.

It localises to the secreted. The protein localises to the cell wall. In terms of biological role, aerial growth, conidiation, and dispersal of filamentous fungi in the environment rely upon a capability of their secreting small amphipathic proteins called hydrophobins (HPBs) with low sequence identity. Class I can self-assemble into an outermost layer of rodlet bundles on aerial cell surfaces, conferring cellular hydrophobicity that supports fungal growth, development and dispersal; whereas Class II form highly ordered films at water-air interfaces through intermolecular interactions but contribute nothing to the rodlet structure. Hyd3 plays a neglectable role in hyphal growth and asexual development and does not seem involved in cellular hydrophobicity, conidial adhesion, stress tolerance nor insect pathogenicity. The chain is Class II hydrophobin 3 from Metarhizium robertsii (strain ARSEF 23 / ATCC MYA-3075) (Metarhizium anisopliae (strain ARSEF 23)).